The primary structure comprises 239 residues: Ribosomal RNA small subunit methyltransferase G (239 aa).

Residues Gly78, Phe83, 129–130 (AE), and Arg148 each bind S-adenosyl-L-methionine.

Belongs to the methyltransferase superfamily. RNA methyltransferase RsmG family.

It is found in the cytoplasm. Its function is as follows. Specifically methylates the N7 position of a guanine in 16S rRNA. This chain is Ribosomal RNA small subunit methyltransferase G, found in Clostridium botulinum (strain Okra / Type B1).